The following is a 400-amino-acid chain: Acetate kinase (400 aa).

Asn-7 lines the Mg(2+) pocket. Lys-14 serves as a coordination point for ATP. Arg-91 contacts substrate. The Proton donor/acceptor role is filled by Asp-148. Residues 208–212, 283–285, and 332–336 contribute to the ATP site; these read HIGNG, DFR, and GIGEH. A Mg(2+)-binding site is contributed by Glu-387.

This sequence belongs to the acetokinase family. In terms of assembly, homodimer. Mg(2+) serves as cofactor. Mn(2+) is required as a cofactor.

It localises to the cytoplasm. It catalyses the reaction acetate + ATP = acetyl phosphate + ADP. It functions in the pathway metabolic intermediate biosynthesis; acetyl-CoA biosynthesis; acetyl-CoA from acetate: step 1/2. Functionally, catalyzes the formation of acetyl phosphate from acetate and ATP. Can also catalyze the reverse reaction. This Clostridium beijerinckii (strain ATCC 51743 / NCIMB 8052) (Clostridium acetobutylicum) protein is Acetate kinase.